The sequence spans 156 residues: dCTP deaminase (156 aa).

DCTP-binding positions include 79-84 (RSSLAR), Asp-95, Gln-124, and Tyr-138.

The protein belongs to the dCTP deaminase family. In terms of assembly, homotrimer.

It carries out the reaction dCTP + H2O + H(+) = dUTP + NH4(+). The protein operates within pyrimidine metabolism; dUMP biosynthesis; dUMP from dCTP (dUTP route): step 1/2. Its function is as follows. Catalyzes the deamination of dCTP to dUTP. This Pyrococcus furiosus (strain ATCC 43587 / DSM 3638 / JCM 8422 / Vc1) protein is dCTP deaminase.